The chain runs to 1107 residues: MSQFWGEFPEKVIQTFQHLQVALIGDIKKCALSSPLFPELSKLDAHSQHHLLASFELPRFGGVTPGVMEQLRDAESELAEAKQRLLRERLHAVANRQNIPYLGDCMYYDAPGISQEELLQAAFLEAPTPAWEHERIRPLWPKDEWFRDARQGPYLEDYGNIPLGDLDTLCLAFDALVEEHWMPIYLLISTFSMFQQYGTQPLLLECAQSAGSLIPACMMTDHHLEPTGDRQADKEARQDYADSQDSIQSMGDFWKEFYTKDSGKKIPDSHKSRLANDPNKVGFTKSALFHKQPLSHSLAQTWANFRGTQDKADLVKVTMDMNIEKYTVRLPDAVRTTAGPLYIEWINLPRMSENSARKLAEVGWNNADICGVDLAVKSHIAVGTPVRVIISLVDGACSDMPTATMCAFEVNLASQNNRSLNLPLLSLPFSRLLADLHDFQNRVKIACQFRDPEGFNVGTPMLSFSSLEFSELKQTAFERNSLLRDSWSEIEKRACHGGGRCVASQGIVQTWEKEVNPPLKEYAPLVLPPVPQPKRNFIDQQTGEVVQSFMQKSRSMRFKSPSDLWSRPSVDGGSTSTQPPSKGSLRCENVPGCAYEVDPLHLLYYESVDVPKDTLAGTLLARIDVRAKAAIFDSAVWRQWVRDGCLKPKIKMRITAATSCFSGIVLGACFDAYRRIPAATKTGITASLVTGLPNTVWATRDTSEVEWDIDLAAVCGHTFFALEDTFGYMDFLIYVLRGNEITAVADWSIYVSFHVDWTQESMLATLIPTFVWPPKPTDISLLKEVWGPYRFTLDGTEAKESFAIMPGTAILHGQQIVRTFPRVVAAHFRSWTGKVRMSIQEVSSIFLTGTYMVGVSWNATADLADIVTRKHWIVKSNEIFEVDLYCPYGENPTFTGQANGKPFIIVHKLGGIVGPKDSVGTFGFMIHIHGLTGVYKNPTLHSGDRSVGSAWFRINNIADDNLVFNIPGRIEDIIAAAGKYDVTNYVNPTSLLFSVTGLHGGIIRLHITWCPNTTLGESKGTLKYMQYLYHTATENFFGDQATRGIIDQDGFTIDIACGDFFGATRVGLPGEVERLGIYSSNAKSIAEIRVSFEVLSMNFYGSTIKVT.

A disordered region spans residues Ser-553 to Ser-584. Residues Gly-572–Ser-581 show a composition bias toward polar residues.

The protein belongs to the nepoviruses RNA2 polyprotein family. Post-translationally, specific enzymatic cleavages in vivo by the P1 encoded 3C-like protease yield mature proteins.

It localises to the host cell junction. The protein resides in the host plasmodesma. It is found in the host cytoplasm. The protein localises to the host nucleus. Its subcellular location is the virion. Its function is as follows. Implicated in RNA2 replication. Could also be required for nematode transmission of the virus. Transports viral genome to neighboring plant cells directly through plasmosdesmata, without any budding. The movement protein allows efficient cell to cell propagation, by bypassing the host cell wall barrier. Acts by forming a tubular structure at the host plasmodesmata, enlarging it enough to allow free passage of virion capsids. This Raspberry ringspot virus (strain S) (RpRSV) protein is RNA2 polyprotein.